The sequence spans 246 residues: UPF0246 protein stu1967 (246 aa).

Belongs to the UPF0246 family.

The sequence is that of UPF0246 protein stu1967 from Streptococcus thermophilus (strain ATCC BAA-250 / LMG 18311).